Here is a 351-residue protein sequence, read N- to C-terminus: Protein IQ-DOMAIN 27 (351 aa).

Residues 15–37 (KKSKDRSHVSGGDSVKGGDHSGD) are disordered. The calmodulin-binding stretch occupies residues 98–114 (EERWAAVKIQKVFRGSL). IQ domains lie at 99–127 (ERWA…GIVK) and 128–150 (LQAL…SIQT). Residues 191–198 (DRRTKIVE) carry the Nuclear localization signal motif. Over residues 299–310 (SFKAKVRSHSAP) the composition is skewed to basic residues. Residues 299–351 (SFKAKVRSHSAPRQRSERQRLSLDEVMASKSSVSGVSMSHQHPPRHSCSCDPL) form a disordered region. The span at 312–321 (QRSERQRLSL) shows a compositional bias: basic and acidic residues. Positions 324–337 (VMASKSSVSGVSMS) are enriched in low complexity.

It belongs to the IQD family. As to quaternary structure, binds to multiple calmodulin (CaM) in the presence of Ca(2+) and CaM-like proteins.

It localises to the nucleus. The protein resides in the nucleus envelope. It is found in the cytoplasm. The protein localises to the cytoskeleton. Its function is as follows. May be involved in cooperative interactions with calmodulins or calmodulin-like proteins. Recruits calmodulin proteins to microtubules, thus being a potential scaffold in cellular signaling and trafficking. May associate with nucleic acids and regulate gene expression at the transcriptional or post-transcriptional level. The sequence is that of Protein IQ-DOMAIN 27 from Arabidopsis thaliana (Mouse-ear cress).